The sequence spans 285 residues: Meiotically up-regulated gene 74 protein (285 aa).

The protein localises to the cytoplasm. Has a role in meiosis. The chain is Meiotically up-regulated gene 74 protein (mug74) from Schizosaccharomyces pombe (strain 972 / ATCC 24843) (Fission yeast).